Here is a 1242-residue protein sequence, read N- to C-terminus: ATP-dependent helicase/nuclease subunit A (1242 aa).

One can recognise a UvrD-like helicase ATP-binding domain in the interval 13–486; the sequence is SQWTDDQWKA…IDLAKNFRSR (474 aa). 34–41 is a binding site for ATP; that stretch reads AAAGSGKT. One can recognise a UvrD-like helicase C-terminal domain in the interval 506–806; it reads GEIEYDADAE…RIMTIHKSKG (301 aa).

The protein belongs to the helicase family. AddA subfamily. In terms of assembly, heterodimer of AddA and AddB/RexB. Mg(2+) is required as a cofactor.

The enzyme catalyses Couples ATP hydrolysis with the unwinding of duplex DNA by translocating in the 3'-5' direction.. It carries out the reaction ATP + H2O = ADP + phosphate + H(+). Functionally, the heterodimer acts as both an ATP-dependent DNA helicase and an ATP-dependent, dual-direction single-stranded exonuclease. Recognizes the chi site generating a DNA molecule suitable for the initiation of homologous recombination. The AddA nuclease domain is required for chi fragment generation; this subunit has the helicase and 3' -&gt; 5' nuclease activities. The protein is ATP-dependent helicase/nuclease subunit A of Bacillus cytotoxicus (strain DSM 22905 / CIP 110041 / 391-98 / NVH 391-98).